The primary structure comprises 323 residues: DNA-directed RNA polymerase subunit alpha 1 (323 aa).

Residues 1–228 (MSNNNSKQEF…EQISVFVSLR (228 aa)) are alpha N-terminal domain (alpha-NTD). The segment at 244 to 323 (IDPILLKPID…DNFRELVEGK (80 aa)) is alpha C-terminal domain (alpha-CTD).

This sequence belongs to the RNA polymerase alpha chain family. Homodimer. The RNAP catalytic core consists of 2 alpha, 1 beta, 1 beta' and 1 omega subunit. When a sigma factor is associated with the core the holoenzyme is formed, which can initiate transcription.

It carries out the reaction RNA(n) + a ribonucleoside 5'-triphosphate = RNA(n+1) + diphosphate. In terms of biological role, DNA-dependent RNA polymerase catalyzes the transcription of DNA into RNA using the four ribonucleoside triphosphates as substrates. The protein is DNA-directed RNA polymerase subunit alpha 1 of Francisella tularensis subsp. novicida (strain U112).